The primary structure comprises 523 residues: Cysteine-rich secretory protein LCCL domain-containing 1 (523 aa).

A signal peptide spans 1–23 (MKYVVQEWLRITTLLFIAQAVSA). Positions 66–206 (LDLHNKLRGQ…PKAVYLVCNY (141 aa)) constitute an SCP domain. The disordered stretch occupies residues 246 to 298 (ERPYSPHEPEEETNEIERQRSKAQDATAQSRPRTHSPSGSTGSEDSEKNEVIS). Polar residues predominate over residues 269 to 288 (QDATAQSRPRTHSPSGSTGS). LCCL domains follow at residues 302-397 (MSQI…ANSF) and 403-505 (TVQA…PGKQ). 4 disulfide bridges follow: cysteine 308-cysteine 326, cysteine 330-cysteine 350, cysteine 409-cysteine 431, and cysteine 435-cysteine 458.

The protein belongs to the CRISP family.

The protein localises to the secreted. This chain is Cysteine-rich secretory protein LCCL domain-containing 1 (CRISPLD1), found in Gallus gallus (Chicken).